The chain runs to 207 residues: Cytidylyl-2-hydroxypropylphosphonate hydrolase (207 aa).

CDP-binding residues include Trp68, Arg74, Gln76, and Ser77. 4 residues coordinate a divalent metal cation: Asn109, Asp125, Glu127, and Asp129. Lys142 serves as a coordination point for CDP. The active-site Proton donor is Lys142. Residue Asp143 participates in a divalent metal cation binding.

Belongs to the FomD family. Mn(2+) serves as cofactor. It depends on Co(2+) as a cofactor.

The catalysed reaction is cytidine 5'-({hydroxy[(S)-2-hydroxypropyl]phosphonoyl}phosphate) + H2O = (S)-2-hydroxypropylphosphonate + CMP + H(+). It functions in the pathway antibiotic biosynthesis; fosfomycin biosynthesis. Its activity is regulated as follows. Hydrolysis of (S)-HPP-CMP is inhibited by CDP. In terms of biological role, involved in fosfomycin biosynthesis. Catalyzes the hydrolysis of cytidylyl (S)-2-hydroxypropylphosphonate ((S)-HPP-CMP) to give (S)-2-hydroxypropylphosphonate ((S)-HPP) and CMP. Can also hydrolyze (R)-HPP-CMP and cytidylyl 2-hydroxyethylphosphonate (HEP-CMP), which is a biosynthetic intermediate before C-methylation, but the catalytic efficiency is much higher with (S)-HPP-CMP. The chain is Cytidylyl-2-hydroxypropylphosphonate hydrolase from Streptomyces fradiae (Streptomyces roseoflavus).